Here is a 412-residue protein sequence, read N- to C-terminus: D-xylonate dehydratase (412 aa).

Homooctamer.

The enzyme catalyses D-xylonate = 2-dehydro-3-deoxy-D-arabinonate + H2O. Functionally, NADP-dependent D-xylose dehydrogenase involved in the degradation of D-xylose, a major component of hemicelluloses such as xylan. Catalyzes the third reaction in the xylose utilization pathway through dehydratation of D-xylonate into 2-dehydro-3-deoxy-D-xylonate. This chain is D-xylonate dehydratase, found in Haloferax volcanii (strain ATCC 29605 / DSM 3757 / JCM 8879 / NBRC 14742 / NCIMB 2012 / VKM B-1768 / DS2) (Halobacterium volcanii).